Here is a 151-residue protein sequence, read N- to C-terminus: Ribosomal RNA large subunit methyltransferase H (151 aa).

S-adenosyl-L-methionine is bound by residues leucine 73, glycine 100, and 119-124 (LSDLTM).

Belongs to the RNA methyltransferase RlmH family. As to quaternary structure, homodimer.

The protein resides in the cytoplasm. It carries out the reaction pseudouridine(1915) in 23S rRNA + S-adenosyl-L-methionine = N(3)-methylpseudouridine(1915) in 23S rRNA + S-adenosyl-L-homocysteine + H(+). In terms of biological role, specifically methylates the pseudouridine at position 1915 (m3Psi1915) in 23S rRNA. This is Ribosomal RNA large subunit methyltransferase H from Aliarcobacter butzleri (strain RM4018) (Arcobacter butzleri).